We begin with the raw amino-acid sequence, 209 residues long: Uracil phosphoribosyltransferase (209 aa).

5-phospho-alpha-D-ribose 1-diphosphate contacts are provided by residues Arg79, Arg104, and 131–139; that span reads DPMLATGGS. Uracil-binding positions include Ile194 and 199-201; that span reads GDA. Asp200 is a binding site for 5-phospho-alpha-D-ribose 1-diphosphate.

This sequence belongs to the UPRTase family. Requires Mg(2+) as cofactor.

The enzyme catalyses UMP + diphosphate = 5-phospho-alpha-D-ribose 1-diphosphate + uracil. The protein operates within pyrimidine metabolism; UMP biosynthesis via salvage pathway; UMP from uracil: step 1/1. Its activity is regulated as follows. Allosterically activated by GTP. Its function is as follows. Catalyzes the conversion of uracil and 5-phospho-alpha-D-ribose 1-diphosphate (PRPP) to UMP and diphosphate. The protein is Uracil phosphoribosyltransferase of Macrococcus caseolyticus (strain JCSC5402) (Macrococcoides caseolyticum).